A 273-amino-acid chain; its full sequence is uncharacterized protein (273 aa).

It belongs to the ycf23 family.

The protein resides in the plastid. Its subcellular location is the chloroplast. This is an uncharacterized protein from Pyropia yezoensis (Susabi-nori).